Here is a 218-residue protein sequence, read N- to C-terminus: N-(5'-phosphoribosyl)anthranilate isomerase (218 aa).

This sequence belongs to the TrpF family.

It carries out the reaction N-(5-phospho-beta-D-ribosyl)anthranilate = 1-(2-carboxyphenylamino)-1-deoxy-D-ribulose 5-phosphate. It participates in amino-acid biosynthesis; L-tryptophan biosynthesis; L-tryptophan from chorismate: step 3/5. This chain is N-(5'-phosphoribosyl)anthranilate isomerase, found in Rhodopseudomonas palustris (strain BisA53).